A 647-amino-acid chain; its full sequence is 1-deoxy-D-xylulose-5-phosphate synthase (647 aa).

Thiamine diphosphate contacts are provided by residues His88 and 129 to 131 (GHA). A Mg(2+)-binding site is contributed by Asp160. Thiamine diphosphate contacts are provided by residues 161-162 (GA), Asn189, Tyr300, and Glu377. Asn189 lines the Mg(2+) pocket.

This sequence belongs to the transketolase family. DXPS subfamily. In terms of assembly, homodimer. Mg(2+) is required as a cofactor. The cofactor is thiamine diphosphate.

It catalyses the reaction D-glyceraldehyde 3-phosphate + pyruvate + H(+) = 1-deoxy-D-xylulose 5-phosphate + CO2. The protein operates within metabolic intermediate biosynthesis; 1-deoxy-D-xylulose 5-phosphate biosynthesis; 1-deoxy-D-xylulose 5-phosphate from D-glyceraldehyde 3-phosphate and pyruvate: step 1/1. In terms of biological role, catalyzes the acyloin condensation reaction between C atoms 2 and 3 of pyruvate and glyceraldehyde 3-phosphate to yield 1-deoxy-D-xylulose-5-phosphate (DXP). The chain is 1-deoxy-D-xylulose-5-phosphate synthase from Dehalococcoides mccartyi (strain CBDB1).